The chain runs to 198 residues: Recombination protein RecR (198 aa).

A C4-type zinc finger spans residues 57–72 (CRQCRTLSEEELCPQC). The Toprim domain occupies 80 to 174 (SLLCVVEGPL…TLSRIAHGVP (95 aa)).

It belongs to the RecR family.

Its function is as follows. May play a role in DNA repair. It seems to be involved in an RecBC-independent recombinational process of DNA repair. It may act with RecF and RecO. In Pseudomonas paraeruginosa (strain DSM 24068 / PA7) (Pseudomonas aeruginosa (strain PA7)), this protein is Recombination protein RecR.